We begin with the raw amino-acid sequence, 134 residues long: Small ribosomal subunit protein uS11 (134 aa).

Belongs to the universal ribosomal protein uS11 family. In terms of assembly, part of the 30S ribosomal subunit. Interacts with proteins S7 and S18. Binds to IF-3.

Its function is as follows. Located on the platform of the 30S subunit, it bridges several disparate RNA helices of the 16S rRNA. Forms part of the Shine-Dalgarno cleft in the 70S ribosome. This is Small ribosomal subunit protein uS11 from Corynebacterium jeikeium (strain K411).